We begin with the raw amino-acid sequence, 201 residues long: Thymidylate kinase (201 aa).

7 to 14 (GIDGSGKS) provides a ligand contact to ATP.

The protein belongs to the thymidylate kinase family.

It catalyses the reaction dTMP + ATP = dTDP + ADP. In terms of biological role, phosphorylation of dTMP to form dTDP in both de novo and salvage pathways of dTTP synthesis. This Thermosipho africanus (strain TCF52B) protein is Thymidylate kinase.